The chain runs to 142 residues: ATP synthase epsilon chain (142 aa).

The protein belongs to the ATPase epsilon chain family. As to quaternary structure, F-type ATPases have 2 components, CF(1) - the catalytic core - and CF(0) - the membrane proton channel. CF(1) has five subunits: alpha(3), beta(3), gamma(1), delta(1), epsilon(1). CF(0) has three main subunits: a, b and c.

The protein localises to the cell inner membrane. Its function is as follows. Produces ATP from ADP in the presence of a proton gradient across the membrane. The sequence is that of ATP synthase epsilon chain from Shewanella putrefaciens (strain CN-32 / ATCC BAA-453).